Here is a 493-residue protein sequence, read N- to C-terminus: MNSMKYRDLRDFLTLLEHKGELKRISFEVDPYLEMTEIADRTLRAGGPALLFENPKGYSMPVLCNLFGTAERVAMGMGQKDVKALHDVGKLLAFLKEPDPPKGFRDLLDKLPKFKQVLNMPTKRLNTAPCQEHVSVGDDVDLTRIPIMHCWPEDAAPLITWGLTVTRGPNKERQNLGIYRQQVLGKNKLIMRWLSHRGGALDFQEWCQAHPGERFPVAVALGADPATILGAVTPIPDTLSEYAFAGLLRGYKTEVVKCLSNNLEVPASAEIVLEGYIEPGELAPEGPYGDHTGYYNEIDMFPVFTVTHITQRHDAIYHSTYTGRPPDEPAVLGVALNEVLVPILQKQFPEIVDFYLPPEGCSYRLAVVTMKKQYPGHAKRVMMGVWSYLRQFMYTKFVIVCDDDINARDWNDVIWAITTRMDPVRDTVLMENTPIDYLDFASPVSGLGSKMGMDATNKWLGETQREWGRPIVMSEEVRTRVDKIWDELDILGP.

Asn-175 lines the Mn(2+) pocket. Residues 178-180, 192-194, and 197-198 each bind prenylated FMN; these read IYR, RWL, and RG. Residue Glu-241 coordinates Mn(2+). Residue Asp-290 is the Proton donor of the active site.

The protein belongs to the UbiD family. As to quaternary structure, homohexamer. Requires prenylated FMN as cofactor. It depends on Mn(2+) as a cofactor.

The protein localises to the cell membrane. The enzyme catalyses a 4-hydroxy-3-(all-trans-polyprenyl)benzoate + H(+) = a 2-(all-trans-polyprenyl)phenol + CO2. It functions in the pathway cofactor biosynthesis; ubiquinone biosynthesis. Functionally, catalyzes the decarboxylation of 3-octaprenyl-4-hydroxy benzoate to 2-octaprenylphenol, an intermediate step in ubiquinone biosynthesis. In Photorhabdus laumondii subsp. laumondii (strain DSM 15139 / CIP 105565 / TT01) (Photorhabdus luminescens subsp. laumondii), this protein is 3-octaprenyl-4-hydroxybenzoate carboxy-lyase.